Here is a 71-residue protein sequence, read N- to C-terminus: Translational regulator CsrA (71 aa).

It belongs to the CsrA/RsmA family. Homodimer; the beta-strands of each monomer intercalate to form a hydrophobic core, while the alpha-helices form wings that extend away from the core.

It is found in the cytoplasm. In terms of biological role, a translational regulator that binds mRNA to regulate translation initiation and/or mRNA stability. Usually binds in the 5'-UTR at or near the Shine-Dalgarno sequence preventing ribosome-binding, thus repressing translation. Its main target seems to be the major flagellin gene, while its function is anatagonized by FliW. The sequence is that of Translational regulator CsrA from Clostridium botulinum (strain Alaska E43 / Type E3).